The sequence spans 261 residues: Ribosomal RNA small subunit methyltransferase J (261 aa).

Residues 109 to 110, 125 to 126, and aspartate 179 each bind S-adenosyl-L-methionine; these read RD and ER.

It belongs to the methyltransferase superfamily. RsmJ family.

Its subcellular location is the cytoplasm. It catalyses the reaction guanosine(1516) in 16S rRNA + S-adenosyl-L-methionine = N(2)-methylguanosine(1516) in 16S rRNA + S-adenosyl-L-homocysteine + H(+). In terms of biological role, specifically methylates the guanosine in position 1516 of 16S rRNA. In Pseudomonas paraeruginosa (strain DSM 24068 / PA7) (Pseudomonas aeruginosa (strain PA7)), this protein is Ribosomal RNA small subunit methyltransferase J.